A 396-amino-acid polypeptide reads, in one-letter code: Purine ribonucleoside efflux pump NepI (396 aa).

Over 1–21 (MSEFIAENRGANAITRPNWSA) the chain is Cytoplasmic. Residues 22-42 (VFSVAFCVACLIIVEFLPVSL) traverse the membrane as a helical segment. Residues 43-54 (LTPMAQDLGISE) lie on the Periplasmic side of the membrane. Residues 55–75 (GVAGQSVTVTAFVAMFASLFI) form a helical membrane-spanning segment. The Cytoplasmic portion of the chain corresponds to 76-85 (TQTIQATDRR). The helical transmembrane segment at 86–106 (YVVILFAVLLTLSCLLVSFAN) threads the bilayer. S107 is a topological domain (periplasmic). Residues 108-128 (FSLLLIGRACLGVALGGFWAI) traverse the membrane as a helical segment. Over 129 to 147 (SASLTMRLVPPRTVPKALS) the chain is Cytoplasmic. The helical transmembrane segment at 148–168 (VIFGAVSIALVIAAPLGSFLG) threads the bilayer. Residues 169-175 (ELIGWRN) lie on the Periplasmic side of the membrane. Residues 176 to 196 (VFNAAAAMGVLCIFWIIKSLP) traverse the membrane as a helical segment. Residues 197 to 215 (SLPGEPSHQKQNTFRLLQR) are Cytoplasmic-facing. Residues 216–236 (PGVMAGMIAIFMSFAGQFAFF) form a helical membrane-spanning segment. The Periplasmic portion of the chain corresponds to 237 to 255 (TYIRPVYMNLAGFGVDGLT). A helical membrane pass occupies residues 256-276 (LVLLSFGIASFVGTSLSSFIL). The Cytoplasmic segment spans residues 277–281 (KRSVK). Residues 282–302 (LALAGAPFVLALSALVLTLWG) form a helical membrane-spanning segment. Residues 303–305 (SDK) lie on the Periplasmic side of the membrane. The chain crosses the membrane as a helical span at residues 306 to 326 (IVATGVAIIWGLTFALIPVGW). Residues 327–343 (STWITRSLADQAEKAGS) lie on the Cytoplasmic side of the membrane. The chain crosses the membrane as a helical span at residues 344-364 (IQVAVIQLANTCGAAIGGYAL). Residues 365–366 (DN) lie on the Periplasmic side of the membrane. The helical transmembrane segment at 367–387 (IGLTSPLMLSGTLMLLTALLV) threads the bilayer. Residues 388 to 396 (TAKVKMKKS) are Cytoplasmic-facing.

The protein belongs to the major facilitator superfamily. DHA1 family. NepI (TC 2.A.1.2.26) subfamily.

It localises to the cell inner membrane. It catalyses the reaction inosine(in) + H(+)(out) = inosine(out) + H(+)(in). The catalysed reaction is guanosine(in) + H(+)(out) = guanosine(out) + H(+)(in). Functionally, involved in the efflux of purine ribonucleosides, such as inosine and guanosine. The chain is Purine ribonucleoside efflux pump NepI from Escherichia coli O6:K15:H31 (strain 536 / UPEC).